The primary structure comprises 136 residues: Large ribosomal subunit protein uL16 (136 aa).

It belongs to the universal ribosomal protein uL16 family. As to quaternary structure, part of the 50S ribosomal subunit.

In terms of biological role, binds 23S rRNA and is also seen to make contacts with the A and possibly P site tRNAs. The sequence is that of Large ribosomal subunit protein uL16 from Actinobacillus pleuropneumoniae serotype 5b (strain L20).